Consider the following 492-residue polypeptide: N-succinylglutamate 5-semialdehyde dehydrogenase (492 aa).

Gly220–Gly225 is a binding site for NAD(+). Catalysis depends on residues Glu243 and Cys277.

Belongs to the aldehyde dehydrogenase family. AstD subfamily.

It catalyses the reaction N-succinyl-L-glutamate 5-semialdehyde + NAD(+) + H2O = N-succinyl-L-glutamate + NADH + 2 H(+). It functions in the pathway amino-acid degradation; L-arginine degradation via AST pathway; L-glutamate and succinate from L-arginine: step 4/5. Catalyzes the NAD-dependent reduction of succinylglutamate semialdehyde into succinylglutamate. This Salmonella enteritidis PT4 (strain P125109) protein is N-succinylglutamate 5-semialdehyde dehydrogenase.